We begin with the raw amino-acid sequence, 65 residues long: Large ribosomal subunit protein bL35 (65 aa).

The interval 1-30 (MPKMKTNRGAAKRFRKTASGRFKSKQSHLR) is disordered. The span at 10 to 30 (AAKRFRKTASGRFKSKQSHLR) shows a compositional bias: basic residues.

This sequence belongs to the bacterial ribosomal protein bL35 family.

The polypeptide is Large ribosomal subunit protein bL35 (Pseudoalteromonas atlantica (strain T6c / ATCC BAA-1087)).